Reading from the N-terminus, the 345-residue chain is uncharacterized protein (345 aa).

The CNNM transmembrane domain maps to 1-198 (MDVLSAVLLA…LSEGLLDHEE (198 aa)). A run of 2 helical transmembrane segments spans residues 3-23 (VLSAVLLALLLIGANAFFVGA) and 95-115 (VPPALLHTLSLAIVVALHVLL). CBS domains follow at residues 217–280 (AVPL…PQTV) and 285–342 (VVRP…MRDG). The helical transmembrane segment at 312–332 (LALVTADNGSVVGMVALEDVV) threads the bilayer.

This sequence belongs to the TerC family.

It is found in the cell membrane. This is an uncharacterized protein from Mycobacterium tuberculosis (strain CDC 1551 / Oshkosh).